We begin with the raw amino-acid sequence, 669 residues long: Collagen alpha-1(II) chain (669 aa).

A 4-hydroxyproline mark is found at P3 and P12. The span at 318–327 (XXXXXXXGAP) shows a compositional bias: low complexity. 3 disordered regions span residues 318 to 360 (XXXX…XXXX), 405 to 438 (XXXXXXVGPPGANGNPGPAGPPGPAGKXXXXXXX), and 638 to 669 (XXGFTGLQGLPGPPGTSGDQGASGPSGPAGPR). 4-hydroxyproline is present on residues P336 and P345. 2 stretches are compositionally biased toward low complexity: residues 339–360 (AGFAGPPGADGQPGAKXXXXXX) and 405–420 (XXXXXXVGPPGANGNP). The residue at position 413 (P413) is a 3-hydroxyproline. 4-hydroxyproline occurs at positions 414, 420, and 426. 2 stretches are compositionally biased toward low complexity: residues 429–438 (AGKXXXXXXX) and 638–647 (XXGFTGLQGL). Residue P648 is modified to 4-hydroxyproline. A 3-hydroxyproline modification is found at P650.

It belongs to the fibrillar collagen family. As to quaternary structure, homotrimers of alpha 1(II) chains. In terms of processing, contains mostly 4-hydroxyproline. Prolines at the third position of the tripeptide repeating unit (G-X-P) are 4-hydroxylated in some or all of the chains. Post-translationally, contains 3-hydroxyproline at a few sites. This modification occurs on the first proline residue in the sequence motif Gly-Pro-Hyp, where Hyp is 4-hydroxyproline.

The protein resides in the secreted. It localises to the extracellular space. The protein localises to the extracellular matrix. Its function is as follows. Type II collagen is specific for cartilaginous tissues. It is essential for the normal embryonic development of the skeleton, for linear growth and for the ability of cartilage to resist compressive forces. This chain is Collagen alpha-1(II) chain, found in Mammut americanum (American mastodon).